Here is a 230-residue protein sequence, read N- to C-terminus: MAAKVENGSNIRKIDVKTPDGKVDGTIELPAELFDAPANIALMHQVVTAQRAAARQGTHSTKTRGDVSGGGRKPYRQKGTGRARQGSMRAPQFTGGGIVHGPKLRDYSQRTPKKMIAAALRGALSDRARNGRIHAVTELVVGKTPSTKSAKEFLGTLTDRKQVLVVIGRSDETGAKSVRNLPGVHLLSPDQLNTYDVLRADDLVFSVEALNSYIAAQQAAGTSTPEKVSA.

Residues arginine 51 to arginine 105 form a disordered region.

The protein belongs to the universal ribosomal protein uL4 family. As to quaternary structure, part of the 50S ribosomal subunit.

One of the primary rRNA binding proteins, this protein initially binds near the 5'-end of the 23S rRNA. It is important during the early stages of 50S assembly. It makes multiple contacts with different domains of the 23S rRNA in the assembled 50S subunit and ribosome. Its function is as follows. Forms part of the polypeptide exit tunnel. The protein is Large ribosomal subunit protein uL4 of Mycobacterium leprae (strain Br4923).